Reading from the N-terminus, the 489-residue chain is ATF/CREB activator 1 (489 aa).

The bZIP domain occupies 384–447 (AWKRARLLER…QKMKKISRLH (64 aa)). The interval 386-406 (KRARLLERNRIAASKCRQRKK) is basic motif. The tract at residues 412-419 (LQREFDQI) is leucine-zipper.

The protein belongs to the bZIP family.

It is found in the nucleus. Transcriptional activator of promoters containing ATF/CREB sites. Can independently stimulate transcription through ATF/CREB sites. Important for a variety of biological functions including growth on non-optimal carbon sources. Regulates the expression of COS8. Has efficient silencing blocking activities. This chain is ATF/CREB activator 1 (ACA1), found in Saccharomyces cerevisiae (strain ATCC 204508 / S288c) (Baker's yeast).